We begin with the raw amino-acid sequence, 218 residues long: Small ribosomal subunit protein uS7m (218 aa).

The N-terminal 19 residues, 1–19 (MSLLGRIAEKTSRLSCLRL), are a transit peptide targeting the mitochondrion.

This sequence belongs to the universal ribosomal protein uS7 family. In terms of assembly, component of the mitochondrial ribosome small subunit (28S) which comprises a 12S rRNA and about 30 distinct proteins.

It is found in the mitochondrion. The sequence is that of Small ribosomal subunit protein uS7m (mRpS7) from Drosophila melanogaster (Fruit fly).